A 168-amino-acid polypeptide reads, in one-letter code: Ribosome maturation factor RimP (168 aa).

This sequence belongs to the RimP family.

It localises to the cytoplasm. In terms of biological role, required for maturation of 30S ribosomal subunits. This Syntrophobacter fumaroxidans (strain DSM 10017 / MPOB) protein is Ribosome maturation factor RimP.